The sequence spans 500 residues: NAD(P)H-quinone oxidoreductase chain 4, chloroplastic (500 aa).

Helical transmembrane passes span 4-24, 35-55, 87-107, 134-154, 167-187, 208-228, 242-262, 272-292, 305-325, 330-350, 364-384, 386-406, 416-436, and 462-482; these read FPWL…LFFL, YTLC…CYHF, FGPI…AWPV, LLLF…LLSM, FILY…GIGL, ALEI…SPII, HYST…YGLV, AHSI…VYAA, IAYS…SITD, GALL…FLAG, MGGM…LSMA, LALP…GIIT, ILIT…SLSM, and LFVS…PDFL.

This sequence belongs to the complex I subunit 4 family.

It is found in the plastid. Its subcellular location is the chloroplast thylakoid membrane. It carries out the reaction a plastoquinone + NADH + (n+1) H(+)(in) = a plastoquinol + NAD(+) + n H(+)(out). The catalysed reaction is a plastoquinone + NADPH + (n+1) H(+)(in) = a plastoquinol + NADP(+) + n H(+)(out). This chain is NAD(P)H-quinone oxidoreductase chain 4, chloroplastic, found in Pelargonium hortorum (Common geranium).